The primary structure comprises 774 residues: Beta-xylosidase/alpha-L-arabinofuranosidase 1 (774 aa).

The first 33 residues, 1 to 33 (ANTKNREPKVSSVFLCFSIFYVTVLLNCNHVYG), serve as a signal peptide directing secretion. Residues Asn48 and Asn136 are each glycosylated (N-linked (GlcNAc...) asparagine). Asp303 is an active-site residue. 2 N-linked (GlcNAc...) asparagine glycosylation sites follow: Asn437 and Asn530.

The protein belongs to the glycoside hydrolase 3 family. Proteolytically cleaved in roots to form a 65 kDa protein.

It localises to the secreted. The protein localises to the extracellular space. The protein resides in the extracellular matrix. It catalyses the reaction Hydrolysis of (1-&gt;4)-beta-D-xylans, to remove successive D-xylose residues from the non-reducing termini.. The enzyme catalyses Hydrolysis of terminal non-reducing alpha-L-arabinofuranoside residues in alpha-L-arabinosides.. In terms of biological role, a bifunctional beta-xylosidase/alpha-L-arabinosidase, exo-enzyme that acts synergistically with endohydrolases. Releases xylose and arabinose from cell walls. Does not cleave xylan from oat spelts although xylan from oat spelts was degraded to xylose when this enzyme was used in combination with xylanase. Also releases xylose and arabinose from aryl glycosides, xylo-oligosaccharides, arabinan from sugar beet and arabino-oligosaccharides, arabinan from sugar beet and arabinoxylan from wheat. This chain is Beta-xylosidase/alpha-L-arabinofuranosidase 1, found in Medicago sativa subsp. varia (Alfalfa).